The sequence spans 119 residues: NADH-quinone oxidoreductase subunit A (119 aa).

A run of 3 helical transmembrane segments spans residues 7–27 (YPVLLFLLVGTGLGIALVSIG), 63–83 (LVAILFIIFDLETAFLFPWGV), and 88–108 (IGWPGFSAMMIFLLEFLLGFA).

It belongs to the complex I subunit 3 family. In terms of assembly, NDH-1 is composed of 14 different subunits. Subunits NuoA, H, J, K, L, M, N constitute the membrane sector of the complex.

It localises to the cell inner membrane. The catalysed reaction is a quinone + NADH + 5 H(+)(in) = a quinol + NAD(+) + 4 H(+)(out). Functionally, NDH-1 shuttles electrons from NADH, via FMN and iron-sulfur (Fe-S) centers, to quinones in the respiratory chain. The immediate electron acceptor for the enzyme in this species is believed to be ubiquinone. Couples the redox reaction to proton translocation (for every two electrons transferred, four hydrogen ions are translocated across the cytoplasmic membrane), and thus conserves the redox energy in a proton gradient. This Burkholderia vietnamiensis (strain G4 / LMG 22486) (Burkholderia cepacia (strain R1808)) protein is NADH-quinone oxidoreductase subunit A.